Consider the following 83-residue polypeptide: Sulfur carrier protein TusA (83 aa).

Cys-19 serves as the catalytic Cysteine persulfide intermediate.

The protein belongs to the sulfur carrier protein TusA family.

The protein localises to the cytoplasm. Its function is as follows. Sulfur carrier protein which probably makes part of a sulfur-relay system. In Aliivibrio salmonicida (strain LFI1238) (Vibrio salmonicida (strain LFI1238)), this protein is Sulfur carrier protein TusA.